A 514-amino-acid chain; its full sequence is MKMWKRRGQKKSMFLSSLLVCCMFASAEYSSCGEYEFFNQTSNSCQACPQCRPGQEPNMSCGHGMKDEGFACVPCPQGKYSKGKYEICRRHKDCNALYKATVREPGTAEKDAECGPCLPGYYMLENRARNLYAMVCHSCQNAPLNTKECKKTTEAIIKPPINPGSTTVLPHPGSPGQGHLATALIIAMSTIFIMAIAIVLIIMFYILKAKPNGQACCSGQVVKAVEAQTNKLEDKKDVPDNVVIFPEKEEYDKLKASPQKTVKSENDASSENEQLLSRSIDSDEEPTSDKLRSSEATNHNLCQANVGYKPDLCLLSLGLLDHRVVCNGTPASAGSQANNTQAPNHITSSNVSSMNAINNNNKTPGMLQSRRKKILDLYARTCHVTEGLSPTELPFDCLEKASRMLSSSYSSDAAVVKTWRHLAESFGLKRDEIGGMSDGLQLFERVSTAGYSIPDLLARLVQIERLDAVESLCADVLGSNEIVALVGRQSVNSFHSQLVCPSPCTSPSPRCASV.

Residues 1–27 (MKMWKRRGQKKSMFLSSLLVCCMFASA) form the signal peptide. Residues 28 to 183 (EYSSCGEYEF…SPGQGHLATA (156 aa)) lie on the Extracellular side of the membrane. 3 TNFR-Cys repeats span residues 31-72 (SCGE…GFAC), 74-114 (PCPQ…DAEC), and 116-149 (PCLP…TKEC). Cystine bridges form between Cys-32-Cys-45, Cys-48-Cys-61, Cys-51-Cys-72, Cys-75-Cys-88, Cys-94-Cys-114, Cys-117-Cys-136, and Cys-139-Cys-149. N-linked (GlcNAc...) asparagine glycans are attached at residues Asn-39 and Asn-58. A helical membrane pass occupies residues 184–204 (LIIAMSTIFIMAIAIVLIIMF). Residues 205–514 (YILKAKPNGQ…TSPSPRCASV (310 aa)) are Cytoplasmic-facing. The tract at residues 254-294 (LKASPQKTVKSENDASSENEQLLSRSIDSDEEPTSDKLRSS) is disordered. A compositionally biased stretch (polar residues) spans 267 to 279 (DASSENEQLLSRS). In terms of domain architecture, Death spans 403-476 (RMLSSSYSSD…DAVESLCADV (74 aa)).

The protein resides in the membrane. Its function is as follows. Receptor for EDA. May mediate the activation of NF-kappa-B and JNK. The sequence is that of Tumor necrosis factor receptor superfamily member EDAR (edar) from Oryzias latipes (Japanese rice fish).